Reading from the N-terminus, the 201-residue chain is Holliday junction branch migration complex subunit RuvA (201 aa).

The tract at residues 1–63 (MYDYIKGTVT…EDNISLFGFQ (63 aa)) is domain I. The interval 64–142 (TTEERYLFKK…DVVASEIVYV (79 aa)) is domain II. Residues 143–153 (APENDMVAGLS) are flexible linker. A domain III region spans residues 153–201 (SPQLEEAVLALEALGYSTRELKKVIPKLSKEEDLTSDAYIKLALQLMTK).

Belongs to the RuvA family. In terms of assembly, homotetramer. Forms an RuvA(8)-RuvB(12)-Holliday junction (HJ) complex. HJ DNA is sandwiched between 2 RuvA tetramers; dsDNA enters through RuvA and exits via RuvB. An RuvB hexamer assembles on each DNA strand where it exits the tetramer. Each RuvB hexamer is contacted by two RuvA subunits (via domain III) on 2 adjacent RuvB subunits; this complex drives branch migration. In the full resolvosome a probable DNA-RuvA(4)-RuvB(12)-RuvC(2) complex forms which resolves the HJ.

Its subcellular location is the cytoplasm. Its function is as follows. The RuvA-RuvB-RuvC complex processes Holliday junction (HJ) DNA during genetic recombination and DNA repair, while the RuvA-RuvB complex plays an important role in the rescue of blocked DNA replication forks via replication fork reversal (RFR). RuvA specifically binds to HJ cruciform DNA, conferring on it an open structure. The RuvB hexamer acts as an ATP-dependent pump, pulling dsDNA into and through the RuvAB complex. HJ branch migration allows RuvC to scan DNA until it finds its consensus sequence, where it cleaves and resolves the cruciform DNA. This chain is Holliday junction branch migration complex subunit RuvA, found in Listeria monocytogenes serotype 4b (strain CLIP80459).